Reading from the N-terminus, the 204-residue chain is dITP/XTP pyrophosphatase (204 aa).

8 to 13 (SNNAHK) is a substrate binding site. 2 residues coordinate Mg(2+): glutamate 41 and aspartate 76. Aspartate 76 acts as the Proton acceptor in catalysis. Substrate-binding positions include serine 77, 159-162 (FGYD), lysine 182, and 187-188 (HR).

This sequence belongs to the HAM1 NTPase family. In terms of assembly, homodimer. Mg(2+) serves as cofactor.

It carries out the reaction XTP + H2O = XMP + diphosphate + H(+). It catalyses the reaction dITP + H2O = dIMP + diphosphate + H(+). The enzyme catalyses ITP + H2O = IMP + diphosphate + H(+). Functionally, pyrophosphatase that catalyzes the hydrolysis of nucleoside triphosphates to their monophosphate derivatives, with a high preference for the non-canonical purine nucleotides XTP (xanthosine triphosphate), dITP (deoxyinosine triphosphate) and ITP. Seems to function as a house-cleaning enzyme that removes non-canonical purine nucleotides from the nucleotide pool, thus preventing their incorporation into DNA/RNA and avoiding chromosomal lesions. This Clostridium perfringens (strain 13 / Type A) protein is dITP/XTP pyrophosphatase.